Here is a 403-residue protein sequence, read N- to C-terminus: Histidine--tRNA ligase (403 aa).

It belongs to the class-II aminoacyl-tRNA synthetase family. As to quaternary structure, homodimer.

Its subcellular location is the cytoplasm. The catalysed reaction is tRNA(His) + L-histidine + ATP = L-histidyl-tRNA(His) + AMP + diphosphate + H(+). In Aquifex aeolicus (strain VF5), this protein is Histidine--tRNA ligase (hisS).